The sequence spans 142 residues: Large ribosomal subunit protein bL17 (142 aa).

The protein belongs to the bacterial ribosomal protein bL17 family. In terms of assembly, part of the 50S ribosomal subunit. Contacts protein L32.

In Chlamydia abortus (strain DSM 27085 / S26/3) (Chlamydophila abortus), this protein is Large ribosomal subunit protein bL17.